Reading from the N-terminus, the 774-residue chain is Formin-like protein 13 (774 aa).

A signal peptide spans 1 to 22 (MRRRVALSTAIALLVGAQLCVA). Positions 51–67 (PPPPMSGSEAVPPPPPA) are enriched in pro residues. Residues 51 to 78 (PPPPMSGSEAVPPPPPAAAASATTGGGR) form a disordered region. Low complexity predominate over residues 68-78 (AAASATTGGGR). A helical membrane pass occupies residues 89–109 (IALSAGLVALAVASYSCCLLL). 4 disordered regions span residues 130–163 (AAAA…DAIY), 176–338 (HEKS…HLKP), 374–402 (FLNS…RRLL), and 740–774 (GSGK…SSSS). Pro residues predominate over residues 194–216 (DLRPLPPLKRPESQPPPPPPSTP). Positions 242–261 (SSFSRSTSQHSTLEQTAMPP) are enriched in low complexity. Over residues 262–286 (MAAPAPPQTNPPRPVRPPPPPPPPR) the composition is skewed to pro residues. Residues 326–749 (GAARPPKPPH…GSGKSFRVPA (424 aa)) form the FH2 domain.

Belongs to the formin-like family. Class-I subfamily.

It localises to the membrane. The sequence is that of Formin-like protein 13 (FH13) from Oryza sativa subsp. japonica (Rice).